The sequence spans 303 residues: Uridylate-specific endoribonuclease C (303 aa).

The N-terminal stretch at 1–16 (MVYLVFLCLLPSLISG) is a signal peptide. The EndoU domain occupies 32–303 (TDAEIQSLAE…KRFVASSYPI (272 aa)). Catalysis depends on residues His-181, His-196, and Lys-239. N-linked (GlcNAc...) asparagine glycosylation is present at Asn-287.

Belongs to the ENDOU family. As to quaternary structure, monomer. It depends on Mn(2+) as a cofactor.

It localises to the secreted. The catalysed reaction is ribonucleotidyl-uridine-RNA = a 5'-end dephospho-uridine-RNA + a 3'-end 2',3'-cyclophospho-ribonucleotide-RNA. Functionally, endoribonuclease that cleaves single-stranded RNAs at 5' of uridylates and releases a product with a 2',3'-cyclic phosphate at the 3'-end. The protein is Uridylate-specific endoribonuclease C (endou-c) of Xenopus laevis (African clawed frog).